The primary structure comprises 461 residues: Cysteine--tRNA ligase (461 aa).

Cysteine 29 serves as a coordination point for Zn(2+). Residues 31–41 (PTVYNYAHIGN) carry the 'HIGH' region motif. Zn(2+) contacts are provided by cysteine 214, histidine 239, and glutamate 243. The 'KMSKS' region motif lies at 271-275 (KMSKS). An ATP-binding site is contributed by lysine 274.

The protein belongs to the class-I aminoacyl-tRNA synthetase family. Monomer. Requires Zn(2+) as cofactor.

The protein localises to the cytoplasm. The catalysed reaction is tRNA(Cys) + L-cysteine + ATP = L-cysteinyl-tRNA(Cys) + AMP + diphosphate. In Hyphomonas neptunium (strain ATCC 15444), this protein is Cysteine--tRNA ligase.